The primary structure comprises 159 residues: Large ribosomal subunit protein uL11 (159 aa).

Residues 1–26 are disordered; it reads MAGTIEVLVPGGKANPGPPLGPELGP.

This sequence belongs to the universal ribosomal protein uL11 family. In terms of assembly, part of the ribosomal stalk of the 50S ribosomal subunit. Interacts with L10 and the large rRNA to form the base of the stalk. L10 forms an elongated spine to which L12 dimers bind in a sequential fashion forming a multimeric L10(L12)X complex.

Its function is as follows. Forms part of the ribosomal stalk which helps the ribosome interact with GTP-bound translation factors. This is Large ribosomal subunit protein uL11 from Haloferax volcanii (strain ATCC 29605 / DSM 3757 / JCM 8879 / NBRC 14742 / NCIMB 2012 / VKM B-1768 / DS2) (Halobacterium volcanii).